Consider the following 313-residue polypeptide: uncharacterized protein (313 aa).

This is an uncharacterized protein from Orgyia pseudotsugata multicapsid polyhedrosis virus (OpMNPV).